The sequence spans 67 residues: Alpha-conotoxin-like Qc1.1a (67 aa).

Positions 1–21 are cleaved as a signal peptide; it reads MGMRMMFTMFLLVVLAITVVS. Positions 22–46 are excised as a propeptide; it reads FTSDHASDGRNTAANDKASNLMALR. Intrachain disulfides connect cysteine 49–cysteine 55 and cysteine 50–cysteine 63. A lacks the Ser-Xaa-Pro motif that is crucial for potent interaction with nAChR region spans residues 51 to 53; it reads PDP.

Belongs to the conotoxin A superfamily. As to expression, expressed by the venom duct.

The protein localises to the secreted. Alpha-conotoxins act on postsynaptic membranes, they bind to the nicotinic acetylcholine receptors (nAChR) and thus inhibit them. Has possibly a distinct nAChR binding mode from other alpha-conotoxins, due to a different three residue motif (lacks the Ser-Xaa-Pro motif). This Conus quercinus (Oak cone) protein is Alpha-conotoxin-like Qc1.1a.